Here is a 227-residue protein sequence, read N- to C-terminus: Uridylate kinase (227 aa).

Position 11–12 (Gly11–Ser12) interacts with ATP. Gly45 contacts UMP. ATP contacts are provided by Gly46 and Arg50. UMP-binding positions include Asp67 and Thr114–Thr120. Thr140, Tyr146, and Asp149 together coordinate ATP.

Belongs to the UMP kinase family. In terms of assembly, homohexamer.

Its subcellular location is the cytoplasm. It carries out the reaction UMP + ATP = UDP + ADP. It participates in pyrimidine metabolism; CTP biosynthesis via de novo pathway; UDP from UMP (UMPK route): step 1/1. With respect to regulation, inhibited by UTP. Catalyzes the reversible phosphorylation of UMP to UDP. This Thermoplasma volcanium (strain ATCC 51530 / DSM 4299 / JCM 9571 / NBRC 15438 / GSS1) protein is Uridylate kinase.